We begin with the raw amino-acid sequence, 524 residues long: 2-isopropylmalate synthase (524 aa).

In terms of domain architecture, Pyruvate carboxyltransferase spans 12 to 274; sequence VIIFDTTLRD…WNRIESKMLT (263 aa). Mn(2+) is bound by residues aspartate 21, histidine 209, histidine 211, and asparagine 245. The regulatory domain stretch occupies residues 398 to 524; the sequence is RLKSLTVIAG…QDAPAVAVAG (127 aa).

Belongs to the alpha-IPM synthase/homocitrate synthase family. LeuA type 1 subfamily. Homodimer. Requires Mn(2+) as cofactor.

It localises to the cytoplasm. The catalysed reaction is 3-methyl-2-oxobutanoate + acetyl-CoA + H2O = (2S)-2-isopropylmalate + CoA + H(+). The protein operates within amino-acid biosynthesis; L-leucine biosynthesis; L-leucine from 3-methyl-2-oxobutanoate: step 1/4. Catalyzes the condensation of the acetyl group of acetyl-CoA with 3-methyl-2-oxobutanoate (2-ketoisovalerate) to form 3-carboxy-3-hydroxy-4-methylpentanoate (2-isopropylmalate). The polypeptide is 2-isopropylmalate synthase (Rhodopseudomonas palustris (strain BisB5)).